The following is a 99-amino-acid chain: Probable non-specific lipid-transfer protein AKCS9 (99 aa).

An N-terminal signal peptide occupies residues 1 to 33 (MTMKMKMKMSVVCAVVVVALFLIDVGPVAEAVT). 4 disulfides stabilise this stretch: Cys-34–Cys-68, Cys-42–Cys-56, Cys-57–Cys-92, and Cys-66–Cys-99.

It belongs to the plant LTP family. As to expression, expressed in most tissues except nodules.

Functionally, potential lipid transfer protein. The polypeptide is Probable non-specific lipid-transfer protein AKCS9 (Vigna unguiculata (Cowpea)).